Consider the following 240-residue polypeptide: 2,3,4,5-tetrahydropyridine-2,6-dicarboxylate N-acetyltransferase (240 aa).

It belongs to the transferase hexapeptide repeat family. DapH subfamily.

The enzyme catalyses (S)-2,3,4,5-tetrahydrodipicolinate + acetyl-CoA + H2O = L-2-acetamido-6-oxoheptanedioate + CoA. It participates in amino-acid biosynthesis; L-lysine biosynthesis via DAP pathway; LL-2,6-diaminopimelate from (S)-tetrahydrodipicolinate (acetylase route): step 1/3. In terms of biological role, catalyzes the transfer of an acetyl group from acetyl-CoA to tetrahydrodipicolinate. This is 2,3,4,5-tetrahydropyridine-2,6-dicarboxylate N-acetyltransferase from Staphylococcus epidermidis (strain ATCC 35984 / DSM 28319 / BCRC 17069 / CCUG 31568 / BM 3577 / RP62A).